Here is a 144-residue protein sequence, read N- to C-terminus: Snaclec coagulation factor IX/factor X-binding protein subunit B1 (144 aa).

Residues 1 to 23 (MGRFIFVSFGLLVVFLSLSGTAA) form the signal peptide. Disulfide bonds link cysteine 25-cysteine 36, cysteine 53-cysteine 142, and cysteine 119-cysteine 134. Positions 32 to 143 (YEGHCYKPFN…CRMMANFVCE (112 aa)) constitute a C-type lectin domain.

It belongs to the snaclec family. As to quaternary structure, heterodimer of subunits A and B1; disulfide-linked. Expressed by the venom gland.

It localises to the secreted. Functionally, anticoagulant protein which binds to the gamma-carboxyglutamic acid-domain regions of factors IX (F9) and factor X (F10) in the presence of calcium with a 1 to 1 stoichiometry. This Trimeresurus stejnegeri (Chinese green tree viper) protein is Snaclec coagulation factor IX/factor X-binding protein subunit B1.